The sequence spans 188 residues: Elongation factor P (188 aa).

Belongs to the elongation factor P family.

The protein resides in the cytoplasm. It participates in protein biosynthesis; polypeptide chain elongation. In terms of biological role, involved in peptide bond synthesis. Stimulates efficient translation and peptide-bond synthesis on native or reconstituted 70S ribosomes in vitro. Probably functions indirectly by altering the affinity of the ribosome for aminoacyl-tRNA, thus increasing their reactivity as acceptors for peptidyl transferase. This Christiangramia forsetii (strain DSM 17595 / CGMCC 1.15422 / KT0803) (Gramella forsetii) protein is Elongation factor P.